Reading from the N-terminus, the 343-residue chain is N-acetyl-gamma-glutamyl-phosphate reductase (343 aa).

C148 is a catalytic residue.

Belongs to the NAGSA dehydrogenase family. Type 1 subfamily.

The protein localises to the cytoplasm. It carries out the reaction N-acetyl-L-glutamate 5-semialdehyde + phosphate + NADP(+) = N-acetyl-L-glutamyl 5-phosphate + NADPH + H(+). Its pathway is amino-acid biosynthesis; L-arginine biosynthesis; N(2)-acetyl-L-ornithine from L-glutamate: step 3/4. In terms of biological role, catalyzes the NADPH-dependent reduction of N-acetyl-5-glutamyl phosphate to yield N-acetyl-L-glutamate 5-semialdehyde. The polypeptide is N-acetyl-gamma-glutamyl-phosphate reductase (Caldicellulosiruptor saccharolyticus (strain ATCC 43494 / DSM 8903 / Tp8T 6331)).